The sequence spans 1109 residues: MEPSEVPGQNSKDNFLEVPNLSDSLCEDEEVKAIFKPGFSPQPSRRGSESSEEVYVHTASSGGRRVSFADNFGFNLVSVKEFDTWELPSVSTTFELGKDAFQTEEYVLSPLFDLPASKEDLMQQLQVQKAMLESTEYVPGSTSMKGIIRVLNISFEKLVYVRMSLDDWQTHYDILAEYVPNSCDGETDQFSFKISLVPPYQKDGSKVEFCIRYETSVGTFWSNNNGTNYTLVCQKKEPEPEPGKPLEEAPSKQKKGCLKVKSSKEESSETSEENNFENSKIADTYIPTIVCSHEEKEDLKSSYQNVKDVNTEHDEHNEKELELMINQRLIRTRCAASEYGKNTLSSDPSNIPNKPEELQKNQSHSEACTDLSQRLLSPGSSAESSLKGDFYHTEKYSSGNESSHQPSDMGEINPSLGGTTSDGSVQLHISSKEILDDNANPAHGSGRGEISCSFPGQLKASNLNKKYEGGAENSEMKDCECLPRDVHLKASDYFKKSTENRPSEEDYGTSKDNKEKRIQLDVDEKTSKNFRSIFYDQERNVGHLEITVEGIEASDRDLTSLPTKDTTIPTWAIMEDTFHSSRTPLGREEAVLTTPEHDLSSSEGTILGGLTGGVCSPRNGNVLKNDYLFQVEKRKSGWINPEDQNKDTQHQQSWNVLESQEKARGSKTNIAEQIKEQVDCEDMWEKRDNTGSLKATPAEALFTCQEAEHCELSPLADHGIPGKAEAGTAYIIKTTSETTPESMSAGEKAIIAKLPQETARSDRPMEVKETAFDPHEGRNDDSHYTLCQRDTVGVIDDNGVEKESHLDICNARLDEMRKEEAMSMHSPGKMRDREKLGIGNITSVEESSQVIANNEKATSRLDLHLEMPSADKKIFPENRDLGQVQELSKKTDIDNTVHSAFNSDTNRASRDDSLLSSHHTETSVLSCEQANAVKNTVTTTALQTSATESEYNCSPTRETQGQPASKPEEVSRGSRRVTSETRKEKCVGQMFQSGECNVEMSQGPMILVSESRENVERERHENEGLINSGDKEFESSASSSLPVQETQDQSNESLLSKYTNSKIPYFLLFLMFLVTVYHYDLMIGLAFYLFSLYWLYWEEGRQKESVKKK.

A phosphoserine; by GSK3 mark is found at S40 and S44. S48 carries the post-translational modification Phosphoserine; by PKA and ISPK. Residue S51 is modified to Phosphoserine. Residue T58 is modified to Phosphothreonine. The short motif at 64–67 is the PP1-binding motif element; that stretch reads RRVS. Phosphoserine; by PKA is present on S67. One can recognise a CBM21 domain in the interval 124 to 232; the sequence is QLQVQKAMLE…NNNGTNYTLV (109 aa). The span at 236 to 251 shows a compositional bias: basic and acidic residues; the sequence is KEPEPEPGKPLEEAPS. Disordered regions lie at residues 236–278, 340–424, 436–455, and 493–517; these read KEPE…NFEN, GKNT…SDGS, DDNANPAHGSGRGEISCSFP, and YFKKSTENRPSEEDYGTSKDNKEKR. Polar residues-rich tracts occupy residues 340–352, 360–384, and 396–406; these read GKNTLSSDPSNIP, KNQSHSEACTDLSQRLLSPGSSAES, and YSSGNESSHQP. Phosphoserine is present on S843. Disordered regions lie at residues 945–985 and 1011–1048; these read SATE…RKEK and SRENVERERHENEGLINSGDKEFESSASSSLPVQETQD. Positions 951-963 are enriched in polar residues; the sequence is YNCSPTRETQGQP. 2 stretches are compositionally biased toward basic and acidic residues: residues 966 to 985 and 1011 to 1034; these read KPEEVSRGSRRVTSETRKEK and SRENVERERHENEGLINSGDKEFE. The span at 1035–1048 shows a compositional bias: polar residues; sequence SSASSSLPVQETQD. A helical membrane pass occupies residues 1066-1086; it reads FLLFLMFLVTVYHYDLMIGLA.

Interacts with PPP1CC catalytic subunit of PP1, and associates with glycogen. Post-translationally, phosphorylation at Ser-48 by ISPK stimulates the dephosphorylation of glycogen synthase and phosphorylase kinase. In terms of tissue distribution, skeletal muscle, diaphragm and cardiac muscle.

Its subcellular location is the membrane. Seems to act as a glycogen-targeting subunit for PP1. PP1 is essential for cell division, and participates in the regulation of glycogen metabolism, muscle contractility and protein synthesis. Plays an important role in glycogen synthesis but is not essential for insulin activation of glycogen synthase. The polypeptide is Protein phosphatase 1 regulatory subunit 3A (PPP1R3A) (Oryctolagus cuniculus (Rabbit)).